A 463-amino-acid polypeptide reads, in one-letter code: uncharacterized protein (463 aa).

6 helical membrane passes run 3–23 (IPPE…SLLV), 88–108 (VAAA…AELA), 112–132 (AIHG…PIAL), 216–236 (FSPA…DFLW), 245–265 (LLLL…SALI), and 276–296 (LPIA…AVAV). The segment at 303 to 322 (VPGGSPPTSNPAPAAPSSNS) is disordered. Over residues 306–316 (GSPPTSNPAPA) the composition is skewed to pro residues. Helical transmembrane passes span 323-343 (VGSA…APPG) and 419-439 (AGTL…AGMV).

Belongs to the mycobacterial PPE family.

It localises to the cell membrane. This is an uncharacterized protein from Mycobacterium tuberculosis (strain CDC 1551 / Oshkosh).